Reading from the N-terminus, the 128-residue chain is Large ribosomal subunit protein bL17 (128 aa).

The protein belongs to the bacterial ribosomal protein bL17 family. In terms of assembly, part of the 50S ribosomal subunit. Contacts protein L32.

This chain is Large ribosomal subunit protein bL17, found in Tolumonas auensis (strain DSM 9187 / NBRC 110442 / TA 4).